We begin with the raw amino-acid sequence, 114 residues long: Small ribosomal subunit protein bS6 (114 aa).

Belongs to the bacterial ribosomal protein bS6 family.

Functionally, binds together with bS18 to 16S ribosomal RNA. This Protochlamydia amoebophila (strain UWE25) protein is Small ribosomal subunit protein bS6.